Consider the following 188-residue polypeptide: Protein GrpE (188 aa).

Basic and acidic residues predominate over residues 1 to 16; that stretch reads MEERNEQVVEEVKEAQ. Positions 1–31 are disordered; that stretch reads MEERNEQVVEEVKEAQVEEAVTPENSEETVE.

It belongs to the GrpE family. Homodimer.

The protein localises to the cytoplasm. In terms of biological role, participates actively in the response to hyperosmotic and heat shock by preventing the aggregation of stress-denatured proteins, in association with DnaK and GrpE. It is the nucleotide exchange factor for DnaK and may function as a thermosensor. Unfolded proteins bind initially to DnaJ; upon interaction with the DnaJ-bound protein, DnaK hydrolyzes its bound ATP, resulting in the formation of a stable complex. GrpE releases ADP from DnaK; ATP binding to DnaK triggers the release of the substrate protein, thus completing the reaction cycle. Several rounds of ATP-dependent interactions between DnaJ, DnaK and GrpE are required for fully efficient folding. This chain is Protein GrpE, found in Bacillus anthracis.